We begin with the raw amino-acid sequence, 438 residues long: Methylenetetrahydrofolate--tRNA-(uracil-5-)-methyltransferase TrmFO 2 (438 aa).

9-14 (GAGLAG) lines the FAD pocket.

Belongs to the MnmG family. TrmFO subfamily. It depends on FAD as a cofactor.

The protein localises to the cytoplasm. It catalyses the reaction uridine(54) in tRNA + (6R)-5,10-methylene-5,6,7,8-tetrahydrofolate + NADH + H(+) = 5-methyluridine(54) in tRNA + (6S)-5,6,7,8-tetrahydrofolate + NAD(+). The catalysed reaction is uridine(54) in tRNA + (6R)-5,10-methylene-5,6,7,8-tetrahydrofolate + NADPH + H(+) = 5-methyluridine(54) in tRNA + (6S)-5,6,7,8-tetrahydrofolate + NADP(+). Its function is as follows. Catalyzes the folate-dependent formation of 5-methyl-uridine at position 54 (M-5-U54) in all tRNAs. The polypeptide is Methylenetetrahydrofolate--tRNA-(uracil-5-)-methyltransferase TrmFO 2 (Mycoplasma mycoides subsp. mycoides SC (strain CCUG 32753 / NCTC 10114 / PG1)).